Consider the following 419-residue polypeptide: ATP-dependent RNA helicase RhlB (419 aa).

The short motif at 9–37 is the Q motif element; it reads QRFSDLALHRIVQQAIKEKGFEFCTPIQA. Positions 40 to 217 constitute a Helicase ATP-binding domain; the sequence is LPITLKGQDI…FEHMNDPQYV (178 aa). 53-60 serves as a coordination point for ATP; it reads AQTGTGKT. The DEAD box motif lies at 163–166; that stretch reads DEAD. In terms of domain architecture, Helicase C-terminal spans 241-388; it reads KMALLMTLLE…VSQYDAKALI (148 aa).

This sequence belongs to the DEAD box helicase family. RhlB subfamily. Component of the RNA degradosome, which is a multiprotein complex involved in RNA processing and mRNA degradation.

Its subcellular location is the cytoplasm. The enzyme catalyses ATP + H2O = ADP + phosphate + H(+). DEAD-box RNA helicase involved in RNA degradation. Has RNA-dependent ATPase activity and unwinds double-stranded RNA. The chain is ATP-dependent RNA helicase RhlB from Histophilus somni (strain 2336) (Haemophilus somnus).